Consider the following 361-residue polypeptide: Queuine tRNA-ribosyltransferase (361 aa).

Residue D92 is the Proton acceptor of the active site. Substrate contacts are provided by residues 92 to 96, D146, Q189, and G216; that span reads DSGGF. An RNA binding region spans residues 247-253; it reads GVGKPAD. D266 (nucleophile) is an active-site residue. An RNA binding; important for wobble base 34 recognition region spans residues 271–275; it reads TRAGR. The Zn(2+) site is built by C304, C306, C309, and H335.

The protein belongs to the queuine tRNA-ribosyltransferase family. In terms of assembly, homodimer. Within each dimer, one monomer is responsible for RNA recognition and catalysis, while the other monomer binds to the replacement base PreQ1. The cofactor is Zn(2+).

It carries out the reaction 7-aminomethyl-7-carbaguanine + guanosine(34) in tRNA = 7-aminomethyl-7-carbaguanosine(34) in tRNA + guanine. Its pathway is tRNA modification; tRNA-queuosine biosynthesis. Functionally, catalyzes the base-exchange of a guanine (G) residue with the queuine precursor 7-aminomethyl-7-deazaguanine (PreQ1) at position 34 (anticodon wobble position) in tRNAs with GU(N) anticodons (tRNA-Asp, -Asn, -His and -Tyr). Catalysis occurs through a double-displacement mechanism. The nucleophile active site attacks the C1' of nucleotide 34 to detach the guanine base from the RNA, forming a covalent enzyme-RNA intermediate. The proton acceptor active site deprotonates the incoming PreQ1, allowing a nucleophilic attack on the C1' of the ribose to form the product. After dissociation, two additional enzymatic reactions on the tRNA convert PreQ1 to queuine (Q), resulting in the hypermodified nucleoside queuosine (7-(((4,5-cis-dihydroxy-2-cyclopenten-1-yl)amino)methyl)-7-deazaguanosine). This Rickettsia massiliae (strain Mtu5) protein is Queuine tRNA-ribosyltransferase.